The sequence spans 491 residues: Delayed-rectifier potassium channel regulatory subunit KCNS3 (491 aa).

Topologically, residues methionine 1–leucine 182 are cytoplasmic. Residues serine 183–valine 204 form a helical membrane-spanning segment. At histidine 205–proline 220 the chain is on the extracellular side. The helical transmembrane segment at valine 221–alanine 243 threads the bilayer. At alanine 244–proline 254 the chain is on the cytoplasmic side. Residues leucine 255–lysine 275 traverse the membrane as a helical segment. The Extracellular segment spans residues glutamate 276–methionine 285. The helical; Voltage-sensor transmembrane segment at glycine 286–histidine 306 threads the bilayer. Residues serine 307–tyrosine 321 lie on the Cytoplasmic side of the membrane. Residues histidine 322–tyrosine 343 traverse the membrane as a helical segment. Topologically, residues serine 344–isoleucine 357 are extracellular. The segment at residues proline 358 to threonine 369 is an intramembrane region (helical). Positions threonine 370–aspartate 375 match the Selectivity filter motif. An intramembrane segment occupies threonine 370–histidine 377. The Extracellular portion of the chain corresponds to proline 378–lysine 384. A helical transmembrane segment spans residues leucine 385 to tyrosine 413. Over glutamine 414–lysine 491 the chain is Cytoplasmic.

It belongs to the potassium channel family. S (TC 1.A.1.2) subfamily. Kv9.3/KCNS3 sub-subfamily. Heterotetramer with KCNB1. Does not form homomultimers.

It is found in the cell membrane. In terms of biological role, potassium channel regulatory subunit that modulates the delayed rectifier potassium channel activity of KCNB1 by namely slowing down the deactivation and inactivation time constants. While it does not form functional channel on its own, it can form functional heterotetrameric channels with KCNB1. In Oryctolagus cuniculus (Rabbit), this protein is Delayed-rectifier potassium channel regulatory subunit KCNS3.